A 482-amino-acid chain; its full sequence is tRNA sulfurtransferase (482 aa).

Residues 61–165 (LAIRDALTRI…DDRLLLIKGR (105 aa)) enclose the THUMP domain. ATP contacts are provided by residues 183 to 184 (LI), Lys-265, Gly-287, and Gln-296. A disulfide bridge connects residues Cys-344 and Cys-456. The Rhodanese domain occupies 404 to 482 (FGPNDVILDI…GFNNVKVYRP (79 aa)). Catalysis depends on Cys-456, which acts as the Cysteine persulfide intermediate.

It belongs to the ThiI family.

Its subcellular location is the cytoplasm. It catalyses the reaction [ThiI sulfur-carrier protein]-S-sulfanyl-L-cysteine + a uridine in tRNA + 2 reduced [2Fe-2S]-[ferredoxin] + ATP + H(+) = [ThiI sulfur-carrier protein]-L-cysteine + a 4-thiouridine in tRNA + 2 oxidized [2Fe-2S]-[ferredoxin] + AMP + diphosphate. It carries out the reaction [ThiS sulfur-carrier protein]-C-terminal Gly-Gly-AMP + S-sulfanyl-L-cysteinyl-[cysteine desulfurase] + AH2 = [ThiS sulfur-carrier protein]-C-terminal-Gly-aminoethanethioate + L-cysteinyl-[cysteine desulfurase] + A + AMP + 2 H(+). It functions in the pathway cofactor biosynthesis; thiamine diphosphate biosynthesis. Its function is as follows. Catalyzes the ATP-dependent transfer of a sulfur to tRNA to produce 4-thiouridine in position 8 of tRNAs, which functions as a near-UV photosensor. Also catalyzes the transfer of sulfur to the sulfur carrier protein ThiS, forming ThiS-thiocarboxylate. This is a step in the synthesis of thiazole, in the thiamine biosynthesis pathway. The sulfur is donated as persulfide by IscS. The chain is tRNA sulfurtransferase from Escherichia coli O9:H4 (strain HS).